The sequence spans 355 residues: uncharacterized protein (355 aa).

58-65 lines the ATP pocket; that stretch reads GYIIFGIK.

This is an uncharacterized protein from Ureaplasma parvum serovar 3 (strain ATCC 700970).